The following is a 330-amino-acid chain: Probable L-asparaginase (330 aa).

An Asparaginase/glutaminase domain is found at 6–330; it reads PTIALLATGG…EKIQEMFEEY (325 aa). The active-site O-isoaspartyl threonine intermediate is T16. Substrate-binding positions include S62 and 95-96; that span reads TD.

Belongs to the asparaginase 1 family.

It is found in the cytoplasm. It catalyses the reaction L-asparagine + H2O = L-aspartate + NH4(+). The polypeptide is Probable L-asparaginase (ansA) (Helicobacter pylori (strain ATCC 700392 / 26695) (Campylobacter pylori)).